Here is a 211-residue protein sequence, read N- to C-terminus: Mediator of RNA polymerase II transcription subunit 20 (211 aa).

This sequence belongs to the Mediator complex subunit 20 family. As to quaternary structure, component of the Mediator complex.

The protein resides in the nucleus. Its function is as follows. Component of the Mediator complex, a coactivator involved in the regulated transcription of nearly all RNA polymerase II-dependent genes. Mediator functions as a bridge to convey information from gene-specific regulatory proteins to the basal RNA polymerase II transcription machinery. Mediator is recruited to promoters by direct interactions with regulatory proteins and serves as a scaffold for the assembly of a functional preinitiation complex with RNA polymerase II and the general transcription factors. The chain is Mediator of RNA polymerase II transcription subunit 20 (SRB2) from Kluyveromyces lactis (strain ATCC 8585 / CBS 2359 / DSM 70799 / NBRC 1267 / NRRL Y-1140 / WM37) (Yeast).